Consider the following 405-residue polypeptide: Cysteine desulfurase IscS (405 aa).

Pyridoxal 5'-phosphate is bound by residues 75-76, N155, Q183, and 203-205; these read AT and SGH. K206 bears the N6-(pyridoxal phosphate)lysine mark. T243 is a pyridoxal 5'-phosphate binding site. C329 functions as the Cysteine persulfide intermediate in the catalytic mechanism. A [2Fe-2S] cluster-binding site is contributed by C329.

The protein belongs to the class-V pyridoxal-phosphate-dependent aminotransferase family. NifS/IscS subfamily. In terms of assembly, homodimer. Forms a heterotetramer with IscU, interacts with other sulfur acceptors. Pyridoxal 5'-phosphate is required as a cofactor.

Its subcellular location is the cytoplasm. The enzyme catalyses (sulfur carrier)-H + L-cysteine = (sulfur carrier)-SH + L-alanine. The protein operates within cofactor biosynthesis; iron-sulfur cluster biosynthesis. In terms of biological role, master enzyme that delivers sulfur to a number of partners involved in Fe-S cluster assembly, tRNA modification or cofactor biosynthesis. Catalyzes the removal of elemental sulfur atoms from cysteine to produce alanine. Functions as a sulfur delivery protein for Fe-S cluster synthesis onto IscU, an Fe-S scaffold assembly protein, as well as other S acceptor proteins. The protein is Cysteine desulfurase IscS of Pseudoalteromonas translucida (strain TAC 125).